The chain runs to 304 residues: Putative S-adenosyl-L-methionine-dependent methyltransferase Mmcs_1043 (304 aa).

Residues D130 and 159 to 160 (DL) each bind S-adenosyl-L-methionine.

Belongs to the UPF0677 family.

Functionally, exhibits S-adenosyl-L-methionine-dependent methyltransferase activity. This is Putative S-adenosyl-L-methionine-dependent methyltransferase Mmcs_1043 from Mycobacterium sp. (strain MCS).